Consider the following 72-residue polypeptide: MAKDDVIEIEGTIKETLPNAMFKVELENGHEILAHVSGKIRMHYIRILPGDKVTVEMSPYDLTKGRITYRFK.

The S1-like domain maps to 1-72; the sequence is MAKDDVIEIE…TKGRITYRFK (72 aa).

The protein belongs to the IF-1 family. In terms of assembly, component of the 30S ribosomal translation pre-initiation complex which assembles on the 30S ribosome in the order IF-2 and IF-3, IF-1 and N-formylmethionyl-tRNA(fMet); mRNA recruitment can occur at any time during PIC assembly.

Its subcellular location is the cytoplasm. Its function is as follows. One of the essential components for the initiation of protein synthesis. Stabilizes the binding of IF-2 and IF-3 on the 30S subunit to which N-formylmethionyl-tRNA(fMet) subsequently binds. Helps modulate mRNA selection, yielding the 30S pre-initiation complex (PIC). Upon addition of the 50S ribosomal subunit IF-1, IF-2 and IF-3 are released leaving the mature 70S translation initiation complex. This is Translation initiation factor IF-1 from Ligilactobacillus salivarius (strain UCC118) (Lactobacillus salivarius).